Here is a 234-residue protein sequence, read N- to C-terminus: Urease subunit alpha (234 aa).

The segment at 1–102 (MKLTPKELDK…LVTIHTPVEA (102 aa)) is urease gamma. Residues 103–234 (GSDKLAPGEV…GTINCGCDNK (132 aa)) are urease beta.

This sequence in the N-terminal section; belongs to the urease gamma subunit family. It in the C-terminal section; belongs to the urease beta subunit family. In terms of assembly, heterohexamer of 3 UreA (alpha) and 3 UreB (beta) subunits.

It localises to the cytoplasm. It catalyses the reaction urea + 2 H2O + H(+) = hydrogencarbonate + 2 NH4(+). It functions in the pathway nitrogen metabolism; urea degradation; CO(2) and NH(3) from urea (urease route): step 1/1. In Helicobacter heilmannii, this protein is Urease subunit alpha.